Here is a 261-residue protein sequence, read N- to C-terminus: Small ribosomal subunit protein eS1 (261 aa).

A compositionally biased stretch (basic residues) spans 1-18; sequence MAVGKNKRISKGKKGGKK. Positions 1–22 are disordered; it reads MAVGKNKRISKGKKGGKKKAAD.

The protein belongs to the eukaryotic ribosomal protein eS1 family. As to quaternary structure, component of the small ribosomal subunit. Mature ribosomes consist of a small (40S) and a large (60S) subunit. The 40S subunit contains about 33 different proteins and 1 molecule of RNA (18S). The 60S subunit contains about 49 different proteins and 3 molecules of RNA (25S, 5.8S and 5S).

It localises to the cytoplasm. In Cicer arietinum (Chickpea), this protein is Small ribosomal subunit protein eS1.